We begin with the raw amino-acid sequence, 435 residues long: Ornithine decarboxylase (435 aa).

At Lys-98 the chain carries N6-(pyridoxal phosphate)lysine. Residues Ser-230, Gly-268, and 301–304 (EPGR) contribute to the pyridoxal 5'-phosphate site. Residue 344–345 (YD) participates in substrate binding. Cys-380 (proton donor; shared with dimeric partner) is an active-site residue. Asp-381 provides a ligand contact to substrate. A pyridoxal 5'-phosphate-binding site is contributed by Tyr-409.

It belongs to the Orn/Lys/Arg decarboxylase class-II family. Homodimer. Only the dimer is catalytically active, as the active sites are constructed of residues from both monomers. Requires pyridoxal 5'-phosphate as cofactor.

It catalyses the reaction L-ornithine + H(+) = putrescine + CO2. Its pathway is amine and polyamine biosynthesis; putrescine biosynthesis via L-ornithine pathway; putrescine from L-ornithine: step 1/1. Its activity is regulated as follows. Inhibited by antizyme (AZ) in response to polyamine levels. AZ inhibits the assembly of the functional homodimer by binding to ODC monomers and targeting them for ubiquitin-independent proteolytic destruction by the 26S proteasome. Functionally, catalyzes the first and rate-limiting step of polyamine biosynthesis that converts ornithine into putrescine, which is the precursor for the polyamines, spermidine and spermine. Polyamines are essential for cell proliferation and are implicated in cellular processes, ranging from DNA replication to apoptosis. The chain is Ornithine decarboxylase (ODC) from Capsicum annuum (Capsicum pepper).